The primary structure comprises 157 residues: Crossover junction endodeoxyribonuclease RuvC (157 aa).

Catalysis depends on residues D7, E66, and D139. D7, E66, and D139 together coordinate Mg(2+).

The protein belongs to the RuvC family. As to quaternary structure, homodimer which binds Holliday junction (HJ) DNA. The HJ becomes 2-fold symmetrical on binding to RuvC with unstacked arms; it has a different conformation from HJ DNA in complex with RuvA. In the full resolvosome a probable DNA-RuvA(4)-RuvB(12)-RuvC(2) complex forms which resolves the HJ. It depends on Mg(2+) as a cofactor.

Its subcellular location is the cytoplasm. The catalysed reaction is Endonucleolytic cleavage at a junction such as a reciprocal single-stranded crossover between two homologous DNA duplexes (Holliday junction).. In terms of biological role, the RuvA-RuvB-RuvC complex processes Holliday junction (HJ) DNA during genetic recombination and DNA repair. Endonuclease that resolves HJ intermediates. Cleaves cruciform DNA by making single-stranded nicks across the HJ at symmetrical positions within the homologous arms, yielding a 5'-phosphate and a 3'-hydroxyl group; requires a central core of homology in the junction. The consensus cleavage sequence is 5'-(A/T)TT(C/G)-3'. Cleavage occurs on the 3'-side of the TT dinucleotide at the point of strand exchange. HJ branch migration catalyzed by RuvA-RuvB allows RuvC to scan DNA until it finds its consensus sequence, where it cleaves and resolves the cruciform DNA. The polypeptide is Crossover junction endodeoxyribonuclease RuvC (Helicobacter pylori (strain J99 / ATCC 700824) (Campylobacter pylori J99)).